The following is a 346-amino-acid chain: tRNA N6-adenosine threonylcarbamoyltransferase (346 aa).

Fe cation contacts are provided by H111 and H115. Substrate contacts are provided by residues 134 to 138 (LVSGG), D167, G180, and N277. D305 is a binding site for Fe cation.

The protein belongs to the KAE1 / TsaD family. The cofactor is Fe(2+).

It localises to the cytoplasm. The enzyme catalyses L-threonylcarbamoyladenylate + adenosine(37) in tRNA = N(6)-L-threonylcarbamoyladenosine(37) in tRNA + AMP + H(+). Its function is as follows. Required for the formation of a threonylcarbamoyl group on adenosine at position 37 (t(6)A37) in tRNAs that read codons beginning with adenine. Is involved in the transfer of the threonylcarbamoyl moiety of threonylcarbamoyl-AMP (TC-AMP) to the N6 group of A37, together with TsaE and TsaB. TsaD likely plays a direct catalytic role in this reaction. The polypeptide is tRNA N6-adenosine threonylcarbamoyltransferase (Bordetella pertussis (strain Tohama I / ATCC BAA-589 / NCTC 13251)).